A 298-amino-acid polypeptide reads, in one-letter code: Aquaporin NIP2-1 (298 aa).

N-linked (GlcNAc...) asparagine glycans are attached at residues asparagine 4, asparagine 13, and asparagine 26. Helical transmembrane passes span 51–71 and 85–105; these read VVSE…AAGI and SIAG…ISGA. Residues 108 to 110 carry the NPA 1 motif; sequence NPA. The next 3 membrane-spanning stretches (helical) occupy residues 124-144, 166-186, and 194-214; these read IQVP…SFVL, SLVV…AVAT, and LAGL…GAIS. Residues 219–221 carry the NPA 2 motif; that stretch reads NPA. Residues 237 to 257 traverse the membrane as a helical segment; that stretch reads WIYFLGPVMGTLSGAWTYTFI.

This sequence belongs to the MIP/aquaporin (TC 1.A.8) family. NIP (TC 1.A.8.12) subfamily. As to expression, mainly expressed in the roots. In roots, it localizes in the main and lateral roots, but not in root hairs. Within a root, it localizes on the plasma membrane of the distal side of both exodermis and endodermis, where casparian strips exist (at protein level). Expressed low levels in leaves and anthers.

It localises to the cell membrane. Silicon influx transporter responsible for silicon transport from the external solution to the root cells. Is coupled with the silicon efflux transporter LSI2 in both exodermal and endodermal root cells for an efficient silicon transport across the cells into the stele. Silicon is beneficial to plant growth and helps plants to overcome abiotic and biotic stresses by preventing lodging (falling over) and increasing resistance to pests and diseases, as well as other stresses. Is coupled with LSI2 transporter in roots for efficient uptake of arsenite, which is further dispatched in shoots and grains. Mediates uptake of methylated arsenic species in roots. The protein is Aquaporin NIP2-1 of Oryza sativa subsp. japonica (Rice).